Consider the following 82-residue polypeptide: ATP synthase subunit c (82 aa).

2 helical membrane-spanning segments follow: residues 18–38 (LGEALGAGLAVIGAGLGIGKI) and 61–81 (IIAAALVEGVSLFAVVVCGFL).

The protein belongs to the ATPase C chain family. In terms of assembly, F-type ATPases have 2 components, F(1) - the catalytic core - and F(0) - the membrane proton channel. F(1) has five subunits: alpha(3), beta(3), gamma(1), delta(1), epsilon(1). F(0) has three main subunits: a(1), b(2) and c(10-14). The alpha and beta chains form an alternating ring which encloses part of the gamma chain. F(1) is attached to F(0) by a central stalk formed by the gamma and epsilon chains, while a peripheral stalk is formed by the delta and b chains.

It localises to the cell inner membrane. In terms of biological role, f(1)F(0) ATP synthase produces ATP from ADP in the presence of a proton or sodium gradient. F-type ATPases consist of two structural domains, F(1) containing the extramembraneous catalytic core and F(0) containing the membrane proton channel, linked together by a central stalk and a peripheral stalk. During catalysis, ATP synthesis in the catalytic domain of F(1) is coupled via a rotary mechanism of the central stalk subunits to proton translocation. Functionally, key component of the F(0) channel; it plays a direct role in translocation across the membrane. A homomeric c-ring of between 10-14 subunits forms the central stalk rotor element with the F(1) delta and epsilon subunits. This chain is ATP synthase subunit c, found in Azobacteroides pseudotrichonymphae genomovar. CFP2.